Reading from the N-terminus, the 466-residue chain is Glutamate-1-semialdehyde 2,1-aminomutase (466 aa).

The residue at position 292 (Lys292) is an N6-(pyridoxal phosphate)lysine.

Belongs to the class-III pyridoxal-phosphate-dependent aminotransferase family. HemL subfamily. In terms of assembly, homodimer. Requires pyridoxal 5'-phosphate as cofactor.

The protein localises to the cytoplasm. The catalysed reaction is (S)-4-amino-5-oxopentanoate = 5-aminolevulinate. It participates in porphyrin-containing compound metabolism; protoporphyrin-IX biosynthesis; 5-aminolevulinate from L-glutamyl-tRNA(Glu): step 2/2. This Tropheryma whipplei (strain TW08/27) (Whipple's bacillus) protein is Glutamate-1-semialdehyde 2,1-aminomutase.